The chain runs to 102 residues: NADH-quinone oxidoreductase subunit K (102 aa).

The next 3 helical transmembrane spans lie at 4–24 (IPME…LVGL), 30–50 (MLFV…AFIV), and 62–82 (VMFL…LALL).

The protein belongs to the complex I subunit 4L family. NDH-1 is composed of 14 different subunits. Subunits NuoA, H, J, K, L, M, N constitute the membrane sector of the complex.

It localises to the cell inner membrane. It catalyses the reaction a quinone + NADH + 5 H(+)(in) = a quinol + NAD(+) + 4 H(+)(out). Its function is as follows. NDH-1 shuttles electrons from NADH, via FMN and iron-sulfur (Fe-S) centers, to quinones in the respiratory chain. The immediate electron acceptor for the enzyme in this species is believed to be ubiquinone. Couples the redox reaction to proton translocation (for every two electrons transferred, four hydrogen ions are translocated across the cytoplasmic membrane), and thus conserves the redox energy in a proton gradient. In Chromohalobacter salexigens (strain ATCC BAA-138 / DSM 3043 / CIP 106854 / NCIMB 13768 / 1H11), this protein is NADH-quinone oxidoreductase subunit K.